We begin with the raw amino-acid sequence, 578 residues long: Vitelline membrane-like protein (578 aa).

The signal sequence occupies residues 1-21 (MCGRRLLFLAAFGCLLANAFS). Residues 72-452 (QGYSAPAAPV…AAPSYSAPAS (381 aa)) are 45 X 8 AA approximate tandem repeats of [PS]-[AS]-Y-S-A-P-A-[AS]. 2 disordered regions span residues 133–442 (ASSS…YSAP) and 487–514 (SGSPAASSYSAPASSTASSGYSAPASKS). The 30-residue stretch at 549–578 (SLPSPPCPKNYVFSCSSVFTPAPCSQGYGY) folds into the VM domain.

Interacts with Vm26Aa and Vm26Ab; forms part of a disulfide-linked network within the vitelline membrane of stage 10 egg chambers. In terms of processing, becomes part of a disulfide-linked network including other vitelline membrane proteins, including Vm26Aa and Vm26Ab, during vitelline membrane biogenesis and maturation. Sulfated by pip; probably involved in embryo dorsal-ventral axis determination. Sulfation by pip may occur on covalently bound glycosaminoglycans. Secreted into the perivitelline space and becomes stably incorporated into the vitelline membrane (at protein level). Expressed throughout the follicle cell layer of stage 10 egg chambers.

It is found in the secreted. Its subcellular location is the extracellular space. The protein resides in the extracellular matrix. Major early eggshell protein secreted by folicle cells into the perivitelline space and incorporated into the vitelline membrane. Localized sulfation by pip may be involved in embryo dorsal-ventral axis determination. The protein is Vitelline membrane-like protein of Drosophila melanogaster (Fruit fly).